The primary structure comprises 512 residues: Apolipoprotein N-acyltransferase (512 aa).

6 helical membrane passes run 5-25 (LDKY…FAAA), 56-76 (FAVS…FYWI), 92-112 (VPLT…CFWL), 118-138 (LPRG…TEFA), 168-188 (FGGI…LVLA), and 195-215 (SGKR…GYTA). One can recognise a CN hydrolase domain in the interval 233 to 477 (LQGNIDQTLK…ETVLEGHIKG (245 aa)). The Proton acceptor role is filled by glutamate 271. Lysine 337 is a catalytic residue. The active-site Nucleophile is the cysteine 389. The chain crosses the membrane as a helical span at residues 487-507 (TGSSWWLMGILTLAALILFIF).

This sequence belongs to the CN hydrolase family. Apolipoprotein N-acyltransferase subfamily.

The protein localises to the cell inner membrane. It catalyses the reaction N-terminal S-1,2-diacyl-sn-glyceryl-L-cysteinyl-[lipoprotein] + a glycerophospholipid = N-acyl-S-1,2-diacyl-sn-glyceryl-L-cysteinyl-[lipoprotein] + a 2-acyl-sn-glycero-3-phospholipid + H(+). It functions in the pathway protein modification; lipoprotein biosynthesis (N-acyl transfer). Its function is as follows. Catalyzes the phospholipid dependent N-acylation of the N-terminal cysteine of apolipoprotein, the last step in lipoprotein maturation. The polypeptide is Apolipoprotein N-acyltransferase (Neisseria meningitidis serogroup A / serotype 4A (strain DSM 15465 / Z2491)).